We begin with the raw amino-acid sequence, 505 residues long: Ikaros family zinc finger protein (505 aa).

C2H2-type zinc fingers lie at residues 18–40 (LTCEICGMVCIGPNVLMVHKRSH), 46–68 (FQCNQCGASFTQKGNLLRHVKLH), 74–96 (FKCSLCSYACRRRDALMGHIRTH), and 102–128 (YKCNFCSRSYKQRSSLEEHQERCPGFH). Composition is skewed to polar residues over residues 262–273 (FLNTPSPVTRSA) and 309–327 (RFQHDSPLSTSRSGLSQQP). Disordered stretches follow at residues 262–296 (FLNTPSPVTRSAGQALEATRRLESESPGLPSDIGS) and 309–440 (RFQH…VSGS). Residues 336 to 345 (ILGGSLGGIC) show a composition bias toward gly residues. The span at 366–377 (ATSSPSNSCPDS) shows a compositional bias: polar residues. Residues 393–406 (GSGSSTSRPNGSTG) are compositionally biased toward low complexity. The segment covering 409–419 (HRPEMHQDNGR) has biased composition (basic and acidic residues). Over residues 424 to 439 (SGASDSSSLPTYNVSG) the composition is skewed to polar residues. 2 C2H2-type zinc fingers span residues 448–470 (YPCHHCGLLFLDHVMYTLHMGCH) and 476–500 (FECNVCGYRSRDRYEFSSHIIRGEH).

The protein belongs to the Ikaros C2H2-type zinc-finger protein family. In terms of assembly, heterodimer and homodimer with other IKAROS family members. As to expression, expression is strongest in the blood, gills and intestine.

Its subcellular location is the nucleus. This Myxine glutinosa (Atlantic hagfish) protein is Ikaros family zinc finger protein.